Reading from the N-terminus, the 335-residue chain is Nucleoid-associated protein Pput_1012 (335 aa).

This sequence belongs to the YejK family.

Its subcellular location is the cytoplasm. It is found in the nucleoid. The protein is Nucleoid-associated protein Pput_1012 of Pseudomonas putida (strain ATCC 700007 / DSM 6899 / JCM 31910 / BCRC 17059 / LMG 24140 / F1).